Consider the following 244-residue polypeptide: MNIDLNADVGEGCASDSELLTLVSSANIACGFHAGDAQTMLTCVREALKNGVAIGAHPSFPDRDNFGRTAMVLPPETVYAQTLYQIGALGAIVQAQGGVMRHVKPHGMLYNQAAKDPHLAQAIAKAVHDYDPSLILVGLAGSELIRAGERHRLVTRQEVFADRGYQADGSLVPRMQPGALIHDEEQALAQTLDMVQAGRVKSVTGVWTTVTAQTVCIHGDGEYALAFARRLRAAFNARNIHVIA.

It belongs to the LamB/PxpA family. Forms a complex composed of PxpA, PxpB and PxpC.

The catalysed reaction is 5-oxo-L-proline + ATP + 2 H2O = L-glutamate + ADP + phosphate + H(+). In terms of biological role, catalyzes the cleavage of 5-oxoproline to form L-glutamate coupled to the hydrolysis of ATP to ADP and inorganic phosphate. This chain is 5-oxoprolinase subunit A, found in Salmonella choleraesuis (strain SC-B67).